The sequence spans 517 residues: Nectin-1 (517 aa).

The signal sequence occupies residues 1-30 (MARMGLAGAAGRWWGLALGLTAFFLPGVHS). The region spanning 31 to 141 (QVVQVNDSMY…GNRESQLNLT (111 aa)) is the Ig-like V-type domain. At 31–355 (QVVQVNDSMY…GRRAGPVPTA (325 aa)) the chain is on the extracellular side. 3 N-linked (GlcNAc...) asparagine glycosylation sites follow: Asn36, Asn72, and Asn139. Cys51 and Cys124 form a disulfide bridge. Ig-like C2-type domains are found at residues 149–238 (WIEG…FKES) and 247–334 (PEVT…VNIT). 2 disulfides stabilise this stretch: Cys172/Cys226 and Cys269/Cys316. Asn202 carries N-linked (GlcNAc...) (complex) asparagine glycosylation. The tract at residues 282–299 (WTTLNGSLPKGVEAQNRT) is interaction with FGFR. N-linked (GlcNAc...) asparagine glycans are attached at residues Asn286, Asn297, Asn307, and Asn332. A helical transmembrane segment spans residues 356-376 (IIGGVAGSILLVLIVVGGIVV). The Cytoplasmic segment spans residues 377–517 (ALRRRRHTFK…SFISKKEWYV (141 aa)). A disordered region spans residues 399–488 (GYSKAGIPQH…DGYGDRTLGY (90 aa)). 3 positions are modified to phosphoserine: Ser422, Ser434, and Ser435. Tyr436 carries the phosphotyrosine modification. The segment covering 436–445 (YEEEEEEEEG) has biased composition (acidic residues). Residues 449–466 (GERKVGGPHPKYDEDAKR) show a composition bias toward basic and acidic residues. A Phosphoserine modification is found at Ser511.

It belongs to the nectin family. As to quaternary structure, cis- and trans-homodimer. Can form trans-heterodimers with NECTIN3 and with NECTIN4. Interaction between NECTIN1 and NECTIN3 on the pre- and postsynaptic sites, respectively, initiates the formation of puncta adherentia junctions between axons and dendrites. Interacts (via cytoplasmic domain) with AFDN (via PDZ domain); this interaction recruits NECTIN1 to cadherin-based adherens junctions and provides a connection with the actin cytoskeleton. Interacts with integrin alphaV/beta3. Interacts (via Ig-like C2-type domain 2) with FGFR1, FGFR2 and FGFR3. (Microbial infection) Interacts with herpes simplex virus 1/HHV-1, herpes simplex virus 2/HHV-2, and pseudorabies virus/PRV envelope glycoprotein D. (Microbial infection) Ubiquitinated by CBL following infection by herpes simplex virus 1/HHV-1 and association with HHV-1 envelope glycoprotein D, leading to its removal from cell surface.

The protein resides in the cell membrane. The protein localises to the cell junction. It localises to the adherens junction. It is found in the presynaptic cell membrane. Its subcellular location is the secreted. In terms of biological role, cell adhesion molecule that promotes cell-cell contacts and plays important roles in the development of the nervous system. Acts by forming homophilic or heterophilic trans-dimers. Heterophilic interactions have been detected between NECTIN1 and NECTIN3 and between NECTIN1 and NECTIN4. Involved in axon guidance by promoting contacts between the commissural axons and the floor plate cells. Involved in synaptogegesis. Has some neurite outgrowth-promoting activity. Promotes formation of checkerboard-like cellular pattern of hair cells and supporting cells in the auditory epithelium via heterophilic interaction with NECTIN3: NECTIN1 is present in the membrane of hair cells and associates with NECTIN3 on supporting cells, thereby mediating heterotypic adhesion between these two cell types. Required for enamel mineralization. Functionally, (Microbial infection) Acts as a receptor for herpes simplex virus 1/HHV-1, herpes simplex virus 2/HHV-2, and pseudorabies virus/PRV. Constitutes the major receptor for herpes simplex virus 1/HHV-1 entry into host cells. This Homo sapiens (Human) protein is Nectin-1.